Consider the following 504-residue polypeptide: Maturase K (504 aa).

The protein belongs to the intron maturase 2 family. MatK subfamily.

The protein localises to the plastid. The protein resides in the chloroplast. Functionally, usually encoded in the trnK tRNA gene intron. Probably assists in splicing its own and other chloroplast group II introns. This is Maturase K from Fagus crenata (Japanese beech).